The following is a 362-amino-acid chain: Histidinol-phosphate aminotransferase (362 aa).

An N6-(pyridoxal phosphate)lysine modification is found at Lys218.

Belongs to the class-II pyridoxal-phosphate-dependent aminotransferase family. Histidinol-phosphate aminotransferase subfamily. Homodimer. Requires pyridoxal 5'-phosphate as cofactor.

It carries out the reaction L-histidinol phosphate + 2-oxoglutarate = 3-(imidazol-4-yl)-2-oxopropyl phosphate + L-glutamate. It functions in the pathway amino-acid biosynthesis; L-histidine biosynthesis; L-histidine from 5-phospho-alpha-D-ribose 1-diphosphate: step 7/9. The protein is Histidinol-phosphate aminotransferase of Xanthomonas campestris pv. campestris (strain 8004).